The chain runs to 72 residues: uncharacterized protein (72 aa).

The protein belongs to the baculoviridae 8 kDa protein family.

This is an uncharacterized protein from Orgyia pseudotsugata (Douglas-fir tussock moth).